A 256-amino-acid chain; its full sequence is Protein FixA (256 aa).

This sequence belongs to the ETF beta-subunit/FixA family. As to quaternary structure, heterodimer of FixA and FixB.

It functions in the pathway amine and polyamine metabolism; carnitine metabolism. In terms of biological role, required for anaerobic carnitine reduction. May bring reductant to CaiA. The sequence is that of Protein FixA from Escherichia coli O81 (strain ED1a).